Here is a 338-residue protein sequence, read N- to C-terminus: Holliday junction branch migration complex subunit RuvB (338 aa).

The segment at M1–Y180 is large ATPase domain (RuvB-L). ATP-binding residues include L19, R20, G61, K64, T65, T66, R170, Y180, and R217. Mg(2+) is bound at residue T65. The segment at T181–E251 is small ATPAse domain (RuvB-S). The tract at residues E254–R338 is head domain (RuvB-H). DNA-binding residues include K309 and R314.

This sequence belongs to the RuvB family. Homohexamer. Forms an RuvA(8)-RuvB(12)-Holliday junction (HJ) complex. HJ DNA is sandwiched between 2 RuvA tetramers; dsDNA enters through RuvA and exits via RuvB. An RuvB hexamer assembles on each DNA strand where it exits the tetramer. Each RuvB hexamer is contacted by two RuvA subunits (via domain III) on 2 adjacent RuvB subunits; this complex drives branch migration. In the full resolvosome a probable DNA-RuvA(4)-RuvB(12)-RuvC(2) complex forms which resolves the HJ.

Its subcellular location is the cytoplasm. It catalyses the reaction ATP + H2O = ADP + phosphate + H(+). The RuvA-RuvB-RuvC complex processes Holliday junction (HJ) DNA during genetic recombination and DNA repair, while the RuvA-RuvB complex plays an important role in the rescue of blocked DNA replication forks via replication fork reversal (RFR). RuvA specifically binds to HJ cruciform DNA, conferring on it an open structure. The RuvB hexamer acts as an ATP-dependent pump, pulling dsDNA into and through the RuvAB complex. RuvB forms 2 homohexamers on either side of HJ DNA bound by 1 or 2 RuvA tetramers; 4 subunits per hexamer contact DNA at a time. Coordinated motions by a converter formed by DNA-disengaged RuvB subunits stimulates ATP hydrolysis and nucleotide exchange. Immobilization of the converter enables RuvB to convert the ATP-contained energy into a lever motion, pulling 2 nucleotides of DNA out of the RuvA tetramer per ATP hydrolyzed, thus driving DNA branch migration. The RuvB motors rotate together with the DNA substrate, which together with the progressing nucleotide cycle form the mechanistic basis for DNA recombination by continuous HJ branch migration. Branch migration allows RuvC to scan DNA until it finds its consensus sequence, where it cleaves and resolves cruciform DNA. This is Holliday junction branch migration complex subunit RuvB from Caldicellulosiruptor bescii (strain ATCC BAA-1888 / DSM 6725 / KCTC 15123 / Z-1320) (Anaerocellum thermophilum).